Here is a 93-residue protein sequence, read N- to C-terminus: UPF0358 protein BPUM_1375 (93 aa).

This sequence belongs to the UPF0358 family.

The sequence is that of UPF0358 protein BPUM_1375 from Bacillus pumilus (strain SAFR-032).